The sequence spans 529 residues: Bifunctional purine biosynthesis protein PurH (529 aa).

The MGS-like domain maps to 1–148; the sequence is MNNARPIRRA…KNHKDTTIIV (148 aa).

This sequence belongs to the PurH family.

It catalyses the reaction (6R)-10-formyltetrahydrofolate + 5-amino-1-(5-phospho-beta-D-ribosyl)imidazole-4-carboxamide = 5-formamido-1-(5-phospho-D-ribosyl)imidazole-4-carboxamide + (6S)-5,6,7,8-tetrahydrofolate. It carries out the reaction IMP + H2O = 5-formamido-1-(5-phospho-D-ribosyl)imidazole-4-carboxamide. It participates in purine metabolism; IMP biosynthesis via de novo pathway; 5-formamido-1-(5-phospho-D-ribosyl)imidazole-4-carboxamide from 5-amino-1-(5-phospho-D-ribosyl)imidazole-4-carboxamide (10-formyl THF route): step 1/1. The protein operates within purine metabolism; IMP biosynthesis via de novo pathway; IMP from 5-formamido-1-(5-phospho-D-ribosyl)imidazole-4-carboxamide: step 1/1. The chain is Bifunctional purine biosynthesis protein PurH from Shewanella pealeana (strain ATCC 700345 / ANG-SQ1).